The chain runs to 383 residues: MKNKLPPFIEIYRALIATPSISATEEALDQSNADLITLLADWFKDLGFNVEVQPVPGTRNKFNMLASCGQGAGGLLLAGHTDTVPFDDGRWTRDPFTLTEHDGKLYGLGTADMKGFFAFILDALRDVDVTKLKKPLYILATADEETSMAGARYFAETTALRPDCAIIGEPTSLQPVRAHKGHISNAIRIQGQSGHSSDPARGVNAIELMHDAIGHILQLRDNLKERYHYEAFTVPYPTLNLGHIHGGDASNRICACCELHMDIRPLPGMTLNELNGLLNDALAPVNERWPGRLTVDELHPPIPGYECPPNHQLVEVVEKLLGAKTEVVNYCTEAPFIQTLCPTLVLGPGSINQAHQPDEYLETRFIKPTRELITQVIHHFCWH.

His-80 provides a ligand contact to Zn(2+). Asp-82 is an active-site residue. Residue Asp-112 participates in Zn(2+) binding. The active site involves Glu-144. Residues Glu-145, Glu-169, and His-355 each coordinate Zn(2+).

The protein belongs to the peptidase M20A family. ArgE subfamily. Homodimer. Requires Zn(2+) as cofactor. Co(2+) serves as cofactor. The cofactor is glutathione.

The protein resides in the cytoplasm. It carries out the reaction N(2)-acetyl-L-ornithine + H2O = L-ornithine + acetate. The protein operates within amino-acid biosynthesis; L-arginine biosynthesis; L-ornithine from N(2)-acetyl-L-ornithine (linear): step 1/1. Catalyzes the hydrolysis of the amide bond of N(2)-acetylated L-amino acids. Cleaves the acetyl group from N-acetyl-L-ornithine to form L-ornithine, an intermediate in L-arginine biosynthesis pathway, and a branchpoint in the synthesis of polyamines. This Escherichia coli O139:H28 (strain E24377A / ETEC) protein is Acetylornithine deacetylase.